We begin with the raw amino-acid sequence, 159 residues long: Globin D, coelomic (159 aa).

G2 carries the post-translational modification N-acetylglycine. The Globin domain maps to 12–158 (DLTPAEKDLI…VQGVLITKHA (147 aa)). H74 and H105 together coordinate heme b.

The protein belongs to the globin family. Homodimer.

In Molpadia arenicola (Sea cucumber), this protein is Globin D, coelomic.